We begin with the raw amino-acid sequence, 137 residues long: Ribonuclease kappa (137 aa).

2 consecutive transmembrane segments (helical) span residues 52-72 (ACGI…GIFF) and 104-124 (VSYN…FSFC).

Belongs to the RNase K family. As to quaternary structure, interacts with the proton translocation complex V0 of the V-ATPase. Interacts with ATP6AP1. As to expression, widely expressed.

It is found in the endomembrane system. Its subcellular location is the cytoplasmic vesicle. The protein resides in the clathrin-coated vesicle membrane. Functionally, endoribonuclease which preferentially cleaves ApU and ApG phosphodiester bonds. Hydrolyzes UpU bonds at a lower rate. Regulates the activity of vacuolar (H+)-ATPase (V-ATPase) which is responsible for acidifying and maintaining the pH of intracellular compartments. Required at an early stage of receptor-mediated endocytosis. Its function is as follows. (Microbial infection) Required at an early stage of both clathrin-mediated and clathrin-independent endocytic uptake of a diverse set of viruses, including dengue, West Nile, Sindbis, Rift Valley Fever, influenza, and human rhinoviruses. The protein is Ribonuclease kappa (RNASEK) of Homo sapiens (Human).